We begin with the raw amino-acid sequence, 1827 residues long: Microtubule-associated protein 2 (1827 aa).

A compositionally biased stretch (basic and acidic residues) spans 1-11 (MADERKDEAKA). Disordered regions lie at residues 1 to 88 (MADE…ETAE) and 109 to 221 (EQEK…EEKA). Over residues 63 to 73 (SQGTYSNTKEN) the composition is skewed to polar residues. Residue Y67 is modified to Phosphotyrosine. Residues 109–119 (EQEKEAQHKDQ) show a composition bias toward basic and acidic residues. The span at 120–133 (TAALPLAAEETANL) shows a compositional bias: low complexity. A phosphoserine mark is found at S136, S140, and S143. Composition is skewed to basic and acidic residues over residues 175–194 (SDQK…DLKH) and 207–221 (YPDK…EEKA). 3 positions are modified to phosphoserine: S285, T323, and Q354. The segment at 340-497 (FAPAFLQPDD…EPTTDMLKQD (158 aa)) is disordered. Positions 364–380 (DSFKIEEPHEAKPDKMA) are enriched in basic and acidic residues. E386 bears the Phosphoserine mark. The span at 392 to 415 (KDAHIPVVEEHVMGKVLEEEKEAI) shows a compositional bias: basic and acidic residues. A compositionally biased stretch (polar residues) spans 416–430 (NQETVQQRDTFTPSG). Positions 435 to 467 (LTEKETELKLEEKTTISDKEAVPKESKPPKPAD) are enriched in basic and acidic residues. S498, S601, S605, S610, S629, S725, and S729 each carry phosphoserine. The interval 579 to 660 (KEEATKSIEP…EPSSPQERMF (82 aa)) is disordered. Basic and acidic residues predominate over residues 596–606 (SDTRESVHESI). The interaction with KNDC1 stretch occupies residues 701–744 (SINLPMSCLDSIALGFNFGRGHDLSPLASDILTNTSGSMDEGDD). A Phosphothreonine modification is found at T733. 2 positions are modified to phosphoserine: S736 and S738. Y745 is subject to Phosphotyrosine. S821, S881, S890, and S936 each carry phosphoserine. Disordered regions lie at residues 931–988 (VDKE…DEIE), 1073–1160 (EATQ…ESSL), 1197–1216 (IQGP…TPSD), 1297–1378 (TTTD…ETTI), 1403–1460 (QLET…EVRR), 1471–1490 (AKKT…LKPA), and 1506–1638 (TTAA…AILV). Basic and acidic residues-rich tracts occupy residues 945–982 (GLSK…KTEE) and 1097–1155 (GHMK…KETS). Phosphoserine is present on residues S1133, S1134, and S1139. Phosphothreonine is present on T1154. Phosphoserine occurs at positions 1155 and 1159. The segment covering 1327 to 1337 (DEEEFEVEEAA) has biased composition (acidic residues). Residues S1347 and S1353 each carry the phosphoserine modification. Composition is skewed to basic and acidic residues over residues 1354 to 1376 (PERE…KDET) and 1407 to 1425 (IPKE…LEKH). Positions 1426 to 1435 (RKEKPFKTGR) are enriched in basic residues. The segment covering 1440-1459 (TPERKVAKKEPSTVSRDEVR) has biased composition (basic and acidic residues). A calmodulin-binding region spans residues 1447-1467 (KKEPSTVSRDEVRRKKAVYKK). Residues 1522–1539 (QAKDKVSDGVTKSPEKRS) are compositionally biased toward basic and acidic residues. S1534 carries the post-translational modification Phosphoserine. Low complexity predominate over residues 1541-1552 (LPRPSSILPPRR). A Phosphoserine modification is found at S1555. 2 stretches are compositionally biased toward low complexity: residues 1562-1574 (SFSL…SSAR) and 1587-1603 (KSGT…AITP). S1588 carries the post-translational modification Phosphoserine. T1602, T1605, T1616, T1619, and T1649 each carry phosphothreonine. The span at 1609 to 1619 (YSSRTPGTPGT) shows a compositional bias: polar residues. S1653 bears the Phosphoserine mark. Tau/MAP repeat units follow at residues 1661–1691 (RLIN…KGGQ), 1692–1722 (VQIV…GGGR), and 1723–1754 (VKIE…GGGN). S1679 is modified (phosphoserine; by MARK1). Residues 1779–1801 (ITQSPGRSSVASPRRLSNVSSSG) are disordered. A phosphoserine mark is found at S1782, S1787, S1790, S1795, and S1808.

Interacts with KNDC1 (via KIND2); the interaction enhances MAP2 phosphorylation and localizes KNDC1 to dendrites. Interacts with DPYSL5. Phosphorylated at serine residues in K-X-G-S motifs by MAP/microtubule affinity-regulating kinase (MARK1 or MARK2), causing detachment from microtubules, and their disassembly. Isoform 2 is probably phosphorylated by PKA at Ser-323, Ser-354 and Ser-386 and by FYN at Tyr-67. The interaction with KNDC1 enhances MAP2 threonine phosphorylation.

It localises to the cytoplasm. The protein resides in the cytoskeleton. It is found in the cell projection. The protein localises to the dendrite. Its function is as follows. The exact function of MAP2 is unknown but MAPs may stabilize the microtubules against depolymerization. They also seem to have a stiffening effect on microtubules. This Homo sapiens (Human) protein is Microtubule-associated protein 2 (MAP2).